The following is a 264-amino-acid chain: 3-methyl-2-oxobutanoate hydroxymethyltransferase (264 aa).

Residues D45 and D84 each coordinate Mg(2+). 3-methyl-2-oxobutanoate-binding positions include 45-46 (DS), D84, and K113. E115 serves as a coordination point for Mg(2+). E182 acts as the Proton acceptor in catalysis.

This sequence belongs to the PanB family. Homodecamer; pentamer of dimers. Requires Mg(2+) as cofactor.

It is found in the cytoplasm. It carries out the reaction 3-methyl-2-oxobutanoate + (6R)-5,10-methylene-5,6,7,8-tetrahydrofolate + H2O = 2-dehydropantoate + (6S)-5,6,7,8-tetrahydrofolate. It participates in cofactor biosynthesis; (R)-pantothenate biosynthesis; (R)-pantoate from 3-methyl-2-oxobutanoate: step 1/2. Functionally, catalyzes the reversible reaction in which hydroxymethyl group from 5,10-methylenetetrahydrofolate is transferred onto alpha-ketoisovalerate to form ketopantoate. This Caldicellulosiruptor bescii (strain ATCC BAA-1888 / DSM 6725 / KCTC 15123 / Z-1320) (Anaerocellum thermophilum) protein is 3-methyl-2-oxobutanoate hydroxymethyltransferase.